Reading from the N-terminus, the 75-residue chain is Iota-conotoxin-like R11.3 (75 aa).

The signal sequence occupies residues 1–19; sequence MKLCLTFLLVLMILASVTG. Positions 20 to 34 are excised as a propeptide; the sequence is EKLSEQTLRRAARKN. 4 disulfide bridges follow: C39–C53, C46–C58, C52–C63, and C57–C70.

This sequence belongs to the conotoxin I1 superfamily. In terms of tissue distribution, expressed by the venom duct.

The protein localises to the secreted. In terms of biological role, iota-conotoxins bind to voltage-gated sodium channels (Nav) and act as agonists by shifting the voltage-dependence of activation to more hyperpolarized levels. Produces general excitatory symptoms. The polypeptide is Iota-conotoxin-like R11.3 (Conus radiatus (Rayed cone)).